The sequence spans 507 residues: Probable DNA ligase (507 aa).

ATP is bound at residue Glu-209. Catalysis depends on Lys-211, which acts as the N6-AMP-lysine intermediate. ATP-binding residues include Arg-216, Arg-231, Glu-260, Phe-295, Arg-366, and Lys-372.

It belongs to the ATP-dependent DNA ligase family. Requires Mg(2+) as cofactor.

It catalyses the reaction ATP + (deoxyribonucleotide)n-3'-hydroxyl + 5'-phospho-(deoxyribonucleotide)m = (deoxyribonucleotide)n+m + AMP + diphosphate.. In terms of biological role, DNA ligase that seals nicks in double-stranded DNA during DNA replication, DNA recombination and DNA repair. This is Probable DNA ligase from Pseudarthrobacter chlorophenolicus (strain ATCC 700700 / DSM 12829 / CIP 107037 / JCM 12360 / KCTC 9906 / NCIMB 13794 / A6) (Arthrobacter chlorophenolicus).